A 772-amino-acid polypeptide reads, in one-letter code: Probable adenosine deaminase (772 aa).

Positions 22 and 24 each coordinate Zn(2+). Substrate contacts are provided by H24, D26, and G180. A Zn(2+)-binding site is contributed by H207. E210 (proton donor) is an active-site residue. Residue D288 participates in Zn(2+) binding.

It belongs to the metallo-dependent hydrolases superfamily. Adenosine and AMP deaminases family. It depends on Zn(2+) as a cofactor.

The catalysed reaction is adenosine + H2O + H(+) = inosine + NH4(+). In terms of biological role, catalyzes the hydrolytic deamination of adenosine. Plays an important role in purine metabolism and in adenosine homeostasis, and may thereby contribute to cellular signaling events. This Dictyostelium discoideum (Social amoeba) protein is Probable adenosine deaminase (ada).